A 782-amino-acid chain; its full sequence is MEVRKLSISWQFLIVLVLILQILSALDFDPYRVLGVSRTASQADIKKAYKKLAREWHPDKNKDPGAEDKFIQISKAYEILSNEEKRSNYDQYGDAGENQGYQKQQQQREYRFRHFHENFYFDESFFHFPFNSERRDSIDEKYLLHFSHYVNEVVPDSFKKPYLIKITSDWCFSCIHIEPVWKEVIQELEELGVGIGVVHAGYERRLAHHLGAHSTPSILGIINGKISFFHNAVVRENLRQFVESLLPGNLVEKVTNKNYVRFLSGWQQENKPHVLLFDQTPIVPLLYKLTAFAYKDYLSFGYVYVGLRGTEEMTRRYNINIYAPTLLVFKEHINRPADVIQARGMKKQIIDDFITRNKYLLAARLTSQKLFHELCPVKRSHRQRKYCVVLLTAETTKLSKPFEAFLSFALANTQDTVRFVHVYSNRQQEFADTLLPDSEAFQGKSAVSILERRNTAGRVVYKTLEDPWIGSESDKFILLGYLDQLRKDPALLSSEAVLPDLTDELAPVFLLRWFYSASDYISDCWDSIFHNNWREMMPLLSLIFSALFILFGTVIVQAFSDSNDERESSPPEKEEAQEKTGKTEPSFTKENSSKIPKKGFVEVTELTDVTYTSNLVRLRPGHMNVVLILSNSTKTSLLQKFALEVYTFTGSSCLHFSFLSLDKHREWLEYLLEFAQDAAPIPNQYDKHFMERDYTGYVLALNGHKKYFCLFKPQKTVEEEEAIGSCSDVDSSLYLGESRGKPSCGLGSRPIKGKLSKLSLWMERLLEGSLQRFYIPSWPELD.

A signal peptide spans 1-25 (MEVRKLSISWQFLIVLVLILQILSA). Over 26–535 (LDFDPYRVLG…DSIFHNNWRE (510 aa)) the chain is Cytoplasmic. One can recognise a J domain in the interval 29-93 (DPYRVLGVSR…EKRSNYDQYG (65 aa)). Residues 119 to 247 (FYFDESFFHF…LRQFVESLLP (129 aa)) enclose the Thioredoxin domain. Residues 536-556 (MMPLLSLIFSALFILFGTVIV) traverse the membrane as a helical; Anchor for type IV membrane protein segment. Residues 557-782 (QAFSDSNDER…FYIPSWPELD (226 aa)) lie on the Extracellular side of the membrane. The segment at 562-593 (SNDERESSPPEKEEAQEKTGKTEPSFTKENSS) is disordered. Residues 563 to 582 (NDERESSPPEKEEAQEKTGK) show a composition bias toward basic and acidic residues. Polar residues predominate over residues 583–593 (TEPSFTKENSS). Asparagine 631 carries N-linked (GlcNAc...) asparagine glycosylation.

Its subcellular location is the endoplasmic reticulum membrane. In terms of biological role, plays an important role in regulating the size of autophagosomes during the formation process. The protein is DnaJ homolog subfamily C member 16 (DNAJC16) of Homo sapiens (Human).